Consider the following 325-residue polypeptide: Gamma-hemolysin component B (325 aa).

The first 25 residues, 1–25 (MNMNKLVKSSVATSMALLLLSNTAN), serve as a signal peptide directing secretion.

It belongs to the aerolysin family. As to quaternary structure, toxicity requires sequential binding and synergistic association of a class S and a class F component which form heterooligomeric complexes. HlgB (class F) associates with either hlgA thus forming an AB toxin or with hlgC thus forming a CB toxin. Interacts with host AMFR.

In terms of biological role, toxin that seems to act by forming pores in the membrane of the cell. Has a hemolytic and a leucotoxic activity. Promotes host AMFR-mediated inflammation by mediating 'Lys-27'-linked ubiquitination of TAB3, TAK1-TAB3 complex formation and phosphorylation of TAK1/MAP3K7. In turn, activates host NF-kappa-B signaling pathway. The polypeptide is Gamma-hemolysin component B (hlgB) (Staphylococcus aureus (strain MRSA252)).